The sequence spans 964 residues: Translation initiation factor IF-2 (964 aa).

Positions Ala26–Pro375 are disordered. 7 stretches are compositionally biased toward basic and acidic residues: residues Tyr49 to Ser60, Val91 to Lys103, Ala118 to Pro154, Ile174 to Gln206, Pro225 to Gly236, Arg243 to Gly252, and Lys328 to Lys339. A tr-type G domain is found at Pro464 to Lys633. The segment at Gly473–Thr480 is G1. Gly473–Thr480 provides a ligand contact to GTP. A G2 region spans residues Gly498–His502. The interval Asp519–Gly522 is G3. Residues Asp519 to His523 and Asn573 to Asp576 contribute to the GTP site. Residues Asn573 to Asp576 are G4. Positions Ser609–Lys611 are G5.

Belongs to the TRAFAC class translation factor GTPase superfamily. Classic translation factor GTPase family. IF-2 subfamily.

It localises to the cytoplasm. One of the essential components for the initiation of protein synthesis. Protects formylmethionyl-tRNA from spontaneous hydrolysis and promotes its binding to the 30S ribosomal subunits. Also involved in the hydrolysis of GTP during the formation of the 70S ribosomal complex. The polypeptide is Translation initiation factor IF-2 (Chromobacterium violaceum (strain ATCC 12472 / DSM 30191 / JCM 1249 / CCUG 213 / NBRC 12614 / NCIMB 9131 / NCTC 9757 / MK)).